Consider the following 209-residue polypeptide: MTGRFIVLEGIDGCGKTTQIQHLLEWLPNSGLMPKGAAVVCTREPGGTPLGRSIRELLLHTSDQEAPAPTAELMLYAADRAQHVETLIRPALERGDWVISDRFSGSTLAYQGYGRGLDRDLIQRLEQIATAGLQPDITLWLRLSVQESLQRRLGDKEDRIEAEGAAFLERVAQGFAQLAEHRSWCAVAADQSASAVRAALERQLQEHLA.

10-17 (GIDGCGKT) contacts ATP.

The protein belongs to the thymidylate kinase family.

It carries out the reaction dTMP + ATP = dTDP + ADP. In terms of biological role, phosphorylation of dTMP to form dTDP in both de novo and salvage pathways of dTTP synthesis. This Synechococcus sp. (strain CC9605) protein is Thymidylate kinase.